We begin with the raw amino-acid sequence, 1206 residues long: Methionine synthase (1206 aa).

The Hcy-binding domain occupies 1 to 314 (MRVTAANQHQ…DHIREVAAAV (314 aa)). Zn(2+) is bound by residues Cys233, Cys299, and Cys300. The Pterin-binding domain maps to 350–609 (VLMIGERTNA…IPEEQRQAAL (260 aa)). The 94-residue stretch at 642–735 (REAELAKLPL…HMEKSDCDFG (94 aa)) folds into the B12-binding N-terminal domain. Residues 740 to 877 (KGRIVLATVK…SAKRGEALAP (138 aa)) enclose the B12-binding domain. Residues 750 to 754 (GDVHD), His753, Ser798, and Ala856 each bind methylcob(III)alamin. A disordered region spans residues 873–925 (EALAPGSPESLAAEADRNKETERKARHERSKRIAVQRKAAEEPVEVPERSDVP). Over residues 886-897 (EADRNKETERKA) the composition is skewed to basic and acidic residues. Residues 898–907 (RHERSKRIAV) are compositionally biased toward basic residues. The region spanning 907-1206 (VQRKAAEEPV…HHPAAKYFNV (300 aa)) is the AdoMet activation domain. Residues 910 to 924 (KAAEEPVEVPERSDV) are compositionally biased toward basic and acidic residues. S-adenosyl-L-methionine contacts are provided by residues Asp954, Arg1149, and 1203–1204 (YF).

The protein belongs to the vitamin-B12 dependent methionine synthase family. Methylcob(III)alamin serves as cofactor. The cofactor is Zn(2+).

It carries out the reaction (6S)-5-methyl-5,6,7,8-tetrahydrofolate + L-homocysteine = (6S)-5,6,7,8-tetrahydrofolate + L-methionine. It functions in the pathway amino-acid biosynthesis; L-methionine biosynthesis via de novo pathway; L-methionine from L-homocysteine (MetH route): step 1/1. Functionally, catalyzes the transfer of a methyl group from methyl-cobalamin to homocysteine, yielding enzyme-bound cob(I)alamin and methionine. Subsequently, remethylates the cofactor using methyltetrahydrofolate. The chain is Methionine synthase (metH) from Mycobacterium leprae (strain TN).